A 586-amino-acid chain; its full sequence is Axin-like protein pry-1 (586 aa).

Positions 1–135 are required for interaction with apr-1; it reads METHLGWARS…FIEAFNKMSS (135 aa). The RGS domain maps to 10 to 131; the sequence is SLEAVLSDRS…GSEEFIEAFN (122 aa). Disordered regions lie at residues 137-168, 344-442, and 478-501; these read TADQ…KSAA, MTDD…DSFA, and TSSL…HSKI. Polar residues-rich tracts occupy residues 151-168 and 368-388; these read HQNT…KSAA and GEGS…QLHN. A compositionally biased stretch (low complexity) spans 421–442; sequence SQSMCAPSYSSASSSYSRDSFA. Basic residues predominate over residues 486–501; it reads RRQHRKAPTPKKHSKI. The 82-residue stretch at 505 to 586 folds into the DIX domain; the sequence is LSNLITISYL…FEGRIAAELR (82 aa).

In terms of assembly, interacts (via N-terminus) with apr-1 (via C-terminus). Interacts with bar-1 (via ARM repeats), gsk-3, and mig-5. Expressed in hypodermal cells (seam cells) V5 and V6, Q neuroblasts, ventral hypodermal cells P7/8 to P11/12, body wall muscle cells and neurons in the head, the tail and the ventral nerve cord.

Its subcellular location is the cell membrane. It localises to the nucleus. The protein localises to the cytoplasm. It is found in the cell cortex. Functionally, works in parallel with axl-1 in negatively regulating bar-1 signaling in vulval precursor cells and Q neuroblasts. Inhibits Wnt signaling, which affects tissue specific expression of Hox genes, egl-5, lin-39 and mab-5. This in turn affects QR (postembryonic neuroblast) cell migration, vulval cell fate specification, and the development of sensory structures by the seam cell lineage. Has a role in alae V cell patterning, ray formation in the male tail and axon guidance. Does not affect B cell polarity. The polypeptide is Axin-like protein pry-1 (Caenorhabditis elegans).